Consider the following 1466-residue polypeptide: ABC transporter C family member 6 (1466 aa).

10 helical membrane passes run serine 16–phenylalanine 36, leucine 63–cysteine 83, tryptophan 91–phenylalanine 111, valine 128–tyrosine 148, phenylalanine 158–tryptophan 178, isoleucine 286–leucine 306, asparagine 322–cysteine 339, tryptophan 400–tyrosine 420, leucine 425–alanine 445, and serine 512–leucine 532. One can recognise an ABC transmembrane type-1 1 domain in the interval isoleucine 286–glutamine 567. The ABC transporter 1 domain maps to valine 601–alanine 824. Residue glycine 636–serine 643 participates in ATP binding. The segment at alanine 840 to glutamate 876 is disordered. Basic and acidic residues predominate over residues serine 844–serine 863. The next 3 helical transmembrane spans lie at tyrosine 890–phenylalanine 910, glycine 937–isoleucine 957, and isoleucine 1026–proline 1046. The ABC transmembrane type-1 2 domain occupies isoleucine 900–asparagine 1182. One can recognise an ABC transporter 2 domain in the interval isoleucine 1219 to alanine 1453. Position 1253–1260 (glycine 1253–serine 1260) interacts with ATP.

It belongs to the ABC transporter superfamily. ABCC family. Conjugate transporter (TC 3.A.1.208) subfamily. Ubiquitous.

Its subcellular location is the membrane. It catalyses the reaction ATP + H2O + xenobioticSide 1 = ADP + phosphate + xenobioticSide 2.. Its function is as follows. Pump for glutathione S-conjugates. The polypeptide is ABC transporter C family member 6 (ABCC6) (Arabidopsis thaliana (Mouse-ear cress)).